The primary structure comprises 304 residues: Protease HtpX homolog (304 aa).

Transmembrane regions (helical) follow at residues 14-34 and 39-59; these read VFII…IGII and YLNG…IMVM. Residue His-144 participates in Zn(2+) binding. The active site involves Glu-145. His-148 serves as a coordination point for Zn(2+). The next 2 membrane-spanning stretches (helical) occupy residues 159-179 and 202-222; these read IAIA…RMIF and AIIY…ATAI. Glu-231 contacts Zn(2+).

This sequence belongs to the peptidase M48B family. Zn(2+) is required as a cofactor.

The protein resides in the cell membrane. The chain is Protease HtpX homolog from Listeria monocytogenes serotype 4a (strain HCC23).